The following is a 114-amino-acid chain: Fumarate reductase subunit D (114 aa).

The next 3 helical transmembrane spans lie at 27 to 47 (ICFPVLLLILGVLLPLGLVPV), 50 to 70 (IVAFAHTWFGKLVILAVTIFP), and 94 to 114 (WVFYGLSALYSVIVFFAVIAL).

The protein belongs to the FrdD family. In terms of assembly, part of an enzyme complex containing four subunits: a flavoprotein (FrdA), an iron-sulfur protein (FrdB), and two hydrophobic anchor proteins (FrdC and FrdD).

It localises to the cell inner membrane. In terms of biological role, anchors the catalytic components of the fumarate reductase complex to the cell membrane, binds quinones. The chain is Fumarate reductase subunit D from Actinobacillus pleuropneumoniae serotype 3 (strain JL03).